The following is a 248-amino-acid chain: Ribonuclease 3 (248 aa).

In terms of domain architecture, RNase III spans 15 to 142 (LKAFFKQYHV…MIAALYLDLG (128 aa)). Position 55 (glutamate 55) interacts with Mg(2+). Residue aspartate 59 is part of the active site. Aspartate 128 and glutamate 131 together coordinate Mg(2+). The active site involves glutamate 131. The 72-residue stretch at 169–240 (DYKTELQEFL…ARDALQKLAT (72 aa)) folds into the DRBM domain.

The protein belongs to the ribonuclease III family. Homodimer. It depends on Mg(2+) as a cofactor.

The protein localises to the cytoplasm. It catalyses the reaction Endonucleolytic cleavage to 5'-phosphomonoester.. In terms of biological role, digests double-stranded RNA. Involved in the processing of primary rRNA transcript to yield the immediate precursors to the large and small rRNAs (23S and 16S). Processes some mRNAs, and tRNAs when they are encoded in the rRNA operon. Processes pre-crRNA and tracrRNA of type II CRISPR loci if present in the organism. This chain is Ribonuclease 3, found in Spiroplasma citri.